The chain runs to 473 residues: 3-isopropylmalate dehydratase large subunit (473 aa).

[4Fe-4S] cluster is bound by residues Cys-354, Cys-414, and Cys-417.

Belongs to the aconitase/IPM isomerase family. LeuC type 1 subfamily. Heterodimer of LeuC and LeuD. The cofactor is [4Fe-4S] cluster.

It catalyses the reaction (2R,3S)-3-isopropylmalate = (2S)-2-isopropylmalate. It functions in the pathway amino-acid biosynthesis; L-leucine biosynthesis; L-leucine from 3-methyl-2-oxobutanoate: step 2/4. In terms of biological role, catalyzes the isomerization between 2-isopropylmalate and 3-isopropylmalate, via the formation of 2-isopropylmaleate. The sequence is that of 3-isopropylmalate dehydratase large subunit from Mycobacterium marinum (strain ATCC BAA-535 / M).